Here is a 91-residue protein sequence, read N- to C-terminus: Small ribosomal subunit protein uS19 (91 aa).

The protein belongs to the universal ribosomal protein uS19 family.

Functionally, protein S19 forms a complex with S13 that binds strongly to the 16S ribosomal RNA. The sequence is that of Small ribosomal subunit protein uS19 from Lachnospira eligens (strain ATCC 27750 / DSM 3376 / VPI C15-48 / C15-B4) (Eubacterium eligens).